A 1091-amino-acid polypeptide reads, in one-letter code: MSGNSFAYSEQAGGGEATELGQEATSTVSPSGAFGLFSSDLKKNEDLKQMLESNKDSAKLDAMKRIVGMIAKGKNASELFPAVVKNVASKNIEIKKLVYVYLVRYAEEQQDLALLSISTFQRALKDPNQLIRASALRVLSSIRVPIIVPIMMLAIKEASADLSPYVRKNAAHAIQKLYSLDPEQKEMLIEVIEKLLKDKSTLVAGSVVMAFEEVCPDRIDLIHKNYRKLCNLLVDVEEWGQVVIIHMLTRYARTQFVSPWKEDDGLEDNEKNFYESDDEQKEKTDQKKKPYAMDPDHRLLIRNTKPLLQSRNAAVVMAVAQLYWHISPKSEVGIISKSLVRLLRSNREVQYIVLQNIATMSIQRKGMLEPYLKSFYVRSTDPTMIKILKLEILTNLANEANISTLLREFQTYVKSQDKQFAAATIQTIGRCATSISEVTDTCLSGLVCLLSNRDEIVVAESVVVIKKLLQMQPAQHGEIIKHMAKLLDSITVPVARASILWLIGENCERVPKIAPDVLRKMAKSFTNEDDLVKLQILNLGAKLYLTNSKQTKLLTQYILNLGKYDQNYDIRDRTRFIRQLIVPNEKSGALSKYAKKIFLAQKPAPLLESPFKDRDHFQLGTLSHTLNTKAIGYLELSNWPEVAPDPSVRNVEVIELQAKEWTPAGKAKKENPARKFYSDSEEEEDSSDSSSDSESESGSASGEQDEEGDSSEDSSEDSSSEHRSDSESVSEVGDKRTAKRNSKSKGKSDSEDEEKENEKSKTSDSSSTDSSSVEESSSDSESESESESESESKKVTMEKEKKTKEDRNLTKDVSLLDLDDFNPVSTPVVLPTPALSPSLIADLEGLNLSTSSSVISVNTPVFVPVKTHVLLHRMSGRGLAAHYFFPRQPCIFGDKMVSIQITLNNTTDRKIENIHIEGKKLPMGMQMHVFNPIESLEPEGSITVSMGIDFCDSTQTASFQLCTKDDCFNVNIQPPVGELLLPVAMSEKDFKKEQGMLTGMNETSTVIIAAPQNFTPSVILQKVVNIANVGVVPSGQDNIYRFAAKTVHSGSLMLVTVELKEGSTAQLIINTERTVIGSVLLRELKPVLSQG.

Disordered regions lie at residues 1 to 32 and 267 to 290; these read MSGN…SPSG and EDNE…KKKP. Over residues 267 to 288 the composition is skewed to basic and acidic residues; that stretch reads EDNEKNFYESDDEQKEKTDQKK. Phosphoserine occurs at positions 276 and 609. The interval 664–807 is disordered; it reads AGKAKKENPA…EKEKKTKEDR (144 aa). A compositionally biased stretch (basic and acidic residues) spans 667-678; sequence AKKENPARKFYS. 2 stretches are compositionally biased toward acidic residues: residues 679–695 and 703–718; these read DSEE…DSES and EQDE…SEDS. Positions 719-736 are enriched in basic and acidic residues; that stretch reads SSEHRSDSESVSEVGDKR. A phosphoserine mark is found at S748 and S750. Residues 763–775 show a composition bias toward low complexity; sequence SDSSSTDSSSVEE. Positions 776 to 789 are enriched in acidic residues; that stretch reads SSSDSESESESESE. Basic and acidic residues predominate over residues 790-807; sequence SESKKVTMEKEKKTKEDR.

It belongs to the adaptor complexes large subunit family. Adaptor protein complex 3 (AP-3) is a heterotetramer composed of two large adaptins (delta-type subunit AP3D1 and beta-type subunit AP3B1 or AP3B2), a medium adaptin (mu-type subunit AP3M1 or AP3M2) and a small adaptin (sigma-type subunit APS1 or AP3S2). AP-3 associates with the BLOC-1 complex. Interacts with KIF3A; interaction is direct; interaction is impaired by pyrophosphorylation of AP3B1. Post-translationally, phosphorylated on serine residues. In terms of processing, pyrophosphorylation by 5-diphosphoinositol pentakisphosphate (5-IP7) impairs interaction with KIF3A. Serine pyrophosphorylation is achieved by Mg(2+)-dependent, but enzyme independent transfer of a beta-phosphate from a inositol pyrophosphate to a pre-phosphorylated serine residue.

The protein localises to the cytoplasmic vesicle. Its subcellular location is the clathrin-coated vesicle membrane. It localises to the golgi apparatus. In terms of biological role, subunit of non-clathrin- and clathrin-associated adaptor protein complex 3 (AP-3) that plays a role in protein sorting in the late-Golgi/trans-Golgi network (TGN) and/or endosomes. The AP complexes mediate both the recruitment of clathrin to membranes and the recognition of sorting signals within the cytosolic tails of transmembrane cargo molecules. AP-3 appears to be involved in the sorting of a subset of transmembrane proteins targeted to lysosomes and lysosome-related organelles. In concert with the BLOC-1 complex, AP-3 is required to target cargos into vesicles assembled at cell bodies for delivery into neurites and nerve terminals. The sequence is that of AP-3 complex subunit beta-1 (AP3B1) from Canis lupus familiaris (Dog).